The following is an 85-amino-acid chain: Depressant scorpion toxin BmKIM (85 aa).

The first 21 residues, 1–21 (MKLFLLLVFFASMLIDGLVNA), serve as a signal peptide directing secretion. The LCN-type CS-alpha/beta domain occupies 22 to 82 (DGYIRGSNGC…TWKSESNTCG (61 aa)). Cystine bridges form between C31/C81, C35/C56, C42/C63, and C46/C65. G82 bears the Glycine amide mark.

Belongs to the long (4 C-C) scorpion toxin superfamily. Sodium channel inhibitor family. In terms of tissue distribution, expressed by the venom gland.

It localises to the secreted. In terms of biological role, causes a slow progressive depressant flaccid paralysis, when injected into S.falculata blowfly larvae. Inhibits dose-dependently the total sodium (Nav) currents both in dorsal root ganglia neurons and in ventricular myocytes. Is toxic to mice by intravenous injection, but not by subcutaneous or intracerebroventricular injection. Produces antiarrhythmia in rat. Is then active on both mammals and insects. The chain is Depressant scorpion toxin BmKIM (KIM2) from Olivierus martensii (Manchurian scorpion).